The sequence spans 1065 residues: Ceruloplasmin (1065 aa).

Positions 1-19 are cleaved as a signal peptide; that stretch reads MKILILGIFLFLCSTPAWA. Plastocyanin-like domains lie at 20–200 and 209–357; these read KEKH…LIIC and KEKH…VQEC. 3 residues coordinate Na(+): Y55, G64, and Y67. Residues H120 and H122 each contribute to the Cu(2+) site. H120 lines the O2 pocket. K128 contributes to the Ca(2+) binding site. An N-linked (GlcNAc...) (complex) asparagine glycan is attached at N138. Ca(2+)-binding residues include Q143, D146, and D147. Cysteines 174 and 200 form a disulfide. The Cu(2+) site is built by H180 and H182. H180 is a binding site for O2. S256 is a Na(+) binding site. Cysteines 276 and 357 form a disulfide. Cu(2+) is bound by residues H295, C338, and H343. N-linked (GlcNAc...) (complex) asparagine glycosylation is found at N358 and N397. Plastocyanin-like domains follow at residues 370–560 and 570–718; these read HVRH…MKIC and RQKD…VNQC. Residues F408, G417, and Y420 each contribute to the Na(+) site. C534 and C560 are oxidised to a cystine. N588 carries N-linked (GlcNAc...) asparagine glycosylation. S617 lines the Na(+) pocket. C637 and C718 are disulfide-bonded. Positions 656, 699, 704, and 709 each coordinate Cu(2+). The active-site Nucleophile; for glutathione peroxidase activity is the C699. Position 722 is a phosphoserine; by FAM20C (S722). 2 consecutive Plastocyanin-like domains span residues 730-900 and 908-1061; these read GERT…LIVC and FNPR…QNED. An N-linked (GlcNAc...) (complex) asparagine glycan is attached at N762. Residues F767, G776, and Y779 each contribute to the Na(+) site. A disulfide bond links C874 and C900. N926 is a glycosylation site (N-linked (GlcNAc...) asparagine). Residue S955 coordinates Na(+). Positions 994, 997, 999, 1039, 1040, 1041, 1045, and 1050 each coordinate Cu(2+). Residues H997 and H999 each contribute to the O2 site. An O2-binding site is contributed by H1041.

This sequence belongs to the multicopper oxidase family. As to quaternary structure, found in a complex with MPO and LTF; interacts directly with MPO and LTF, which allows Fe(3+) incorporation into LTF, activation of CP ferroxidase activity and protection of CP antioxidant properties by MPO. Requires Cu(2+) as cofactor. Expressed by the liver and secreted in plasma.

The protein localises to the secreted. It catalyses the reaction 4 Fe(2+) + O2 + 4 H(+) = 4 Fe(3+) + 2 H2O. It carries out the reaction 4 Cu(+) + O2 + 4 H(+) = 4 Cu(2+) + 2 H2O. The enzyme catalyses a hydroperoxide + 2 glutathione = an alcohol + glutathione disulfide + H2O. The catalysed reaction is 4 nitric oxide + O2 + 2 H2O = 4 nitrite + 4 H(+). It catalyses the reaction 2 glutathione + H2O2 = glutathione disulfide + 2 H2O. Its function is as follows. Multifunctional blue, copper-binding (6-7 atoms per molecule) glycoprotein. It has ferroxidase activity oxidizing Fe(2+) to Fe(3+) without releasing radical oxygen species. It is involved in iron transport across the cell membrane. Copper ions provide a large number of enzymatic activites. Oxidizes highly toxic ferrous ions to the ferric state for further incorporation onto apo-transferrins, catalyzes Cu(+) oxidation and promotes the oxidation of biogenic amines such as norepinephrin and serotonin. Provides Cu(2+) ions for the ascorbate-mediated deaminase degradation of the heparan sulfate chains of GPC1. Has glutathione peroxidase-like activity, can remove both hydrogen peroxide and lipid hydroperoxide in the presence of thiols. Also shows NO-oxidase and NO2 synthase activities that determine endocrine NO homeostasis. In Homo sapiens (Human), this protein is Ceruloplasmin.